A 160-amino-acid chain; its full sequence is Small ribosomal subunit protein bS6 (160 aa).

2 stretches are compositionally biased toward basic and acidic residues: residues 94-119 (EEHEEGPSAMMRKADRDRERDDRGGR) and 125-152 (RGDREGRGDREGGGFRGDRGPRRPREDA). The interval 94 to 160 (EEHEEGPSAM…DADTAAASEE (67 aa)) is disordered.

The protein belongs to the bacterial ribosomal protein bS6 family.

Its function is as follows. Binds together with bS18 to 16S ribosomal RNA. The sequence is that of Small ribosomal subunit protein bS6 from Rhodopseudomonas palustris (strain BisB5).